The following is a 105-amino-acid chain: Large ribosomal subunit protein bL21 (105 aa).

This sequence belongs to the bacterial ribosomal protein bL21 family. In terms of assembly, part of the 50S ribosomal subunit. Contacts protein L20.

This protein binds to 23S rRNA in the presence of protein L20. The protein is Large ribosomal subunit protein bL21 of Treponema pallidum (strain Nichols).